A 431-amino-acid chain; its full sequence is Hemagglutinin-esterase (431 aa).

Residues 1-21 (MARTDAMAPRTLLLVLSLGYA) form the signal peptide. The segment at 11–131 (TLLLVLSLGY…DNNRWMGNKA (121 aa)) is esterase domain 1. Residues 22–399 (FGFNEPLNVV…PVCMYDPLPV (378 aa)) are Virion surface-facing. Residue S44 is the Nucleophile of the active site. An intrachain disulfide couples C48 to C69. Residues N53, N93, N151, N157, N199, N244, N248, and N309 are each glycosylated (N-linked (GlcNAc...) asparagine; by host). C117 and C166 are disulfide-bonded. The interval 132–274 (RFYTQLYQKM…GNYISISNEL (143 aa)) is receptor binding. 2 disulfides stabilise this stretch: C205/C284 and C213/C257. The interval 275 to 387 (LLTVPSKAIC…HCPTAANIVF (113 aa)) is esterase domain 2. A disulfide bridge links C315 with C320. N324 is a glycosylation site (N-linked (GlcNAc...) asparagine; by host). Residues D334 and H337 each act as charge relay system in the active site. Residues N352 and N366 are each glycosylated (N-linked (GlcNAc...) asparagine; by host). The cysteines at positions 355 and 379 are disulfide-linked. The helical transmembrane segment at 400–420 (ILLGVLLGIAVLIIVFLMFYF) threads the bilayer. The Intravirion segment spans residues 421-431 (MTDSGVRLHEA).

Belongs to the influenza type C/coronaviruses hemagglutinin-esterase family. Homodimer; disulfide-linked. Forms a complex with the M protein in the pre-Golgi. Associates then with S-M complex to form a ternary complex S-M-HE. Post-translationally, N-glycosylated in the host RER.

Its subcellular location is the virion membrane. It localises to the host cell membrane. It carries out the reaction N-acetyl-9-O-acetylneuraminate + H2O = N-acetylneuraminate + acetate + H(+). It catalyses the reaction N-acetyl-4-O-acetylneuraminate + H2O = N-acetylneuraminate + acetate + H(+). Functionally, structural protein that makes short spikes at the surface of the virus. Contains receptor binding and receptor-destroying activities. Mediates de-O-acetylation of N-acetyl-4-O-acetylneuraminic acid, which is probably the receptor determinant recognized by the virus on the surface of erythrocytes and susceptible cells. This receptor-destroying activity is important for virus release as it probably helps preventing self-aggregation and ensures the efficient spread of the progeny virus from cell to cell. May serve as a secondary viral attachment protein for initiating infection, the spike protein being the major one. May become a target for both the humoral and the cellular branches of the immune system. The polypeptide is Hemagglutinin-esterase (Murine coronavirus (strain DVIM) (MHV-DVIM)).